The chain runs to 242 residues: MSQITMRQMIEAGVHFGHQTRFWNPKMAQYIFGARNKIHIVNLEKTLPMFQEAQEAVRRLVANKGTVLFVGTKRQARDIIREEATRAGMPFVDHRWLGGMLTNYKTVKQSIKRLEEKTAALENAAESGFSKKEILEMQRDVEKLERSLGGIKNMKGLPDAIFVIDTGYQKGTLVEAEKLGIPVIAVVDTNNSPDGVKYVIPGNDDSAKAIRLYCRGIADAVLEGKNQALQETVAAAQETAAE.

The protein belongs to the universal ribosomal protein uS2 family.

The polypeptide is Small ribosomal subunit protein uS2 (Neisseria gonorrhoeae (strain ATCC 700825 / FA 1090)).